We begin with the raw amino-acid sequence, 374 residues long: 2-oxoglutarate-Fe(II) type oxidoreductase ppzC (374 aa).

A disordered region spans residues 111–130 (KDGPFDSGYRGPGTQRVNPT). A Fe2OG dioxygenase domain is found at 220 to 330 (YPDASLEINF…RVSMPFFWGF (111 aa)). Fe cation contacts are provided by H254, D256, and H311. Residue R321 coordinates 2-oxoglutarate.

This sequence belongs to the iron/ascorbate-dependent oxidoreductase family. Requires Fe(2+) as cofactor.

The enzyme catalyses peramine + 2-oxoglutarate + O2 = 8-hydroxyperamine + succinate + CO2. It participates in secondary metabolite biosynthesis. Functionally, 2-oxoglutarate-Fe(II) type oxidoreductase; part of the gene cluster that mediates the biosynthesis of pyrrolopyrazines, secondary metabolites showing insecticidal activity. Within the pathway, ppzC uses peramine as substrate for hydroxylation to yield the novel analog 8-hydroxyperamine. The single multifunctional NRPS ppzA is sufficient to produce peramine via condensation of 1-pyrroline-5-carboxylate and arginine, N-methylation of the alpha-amino group of arginine and reduction of the thioester and the cyclization to form an iminium ion resulting in release from the peptide synthetase. Deprotonation of this intermediate and oxidation of the pyrroline ring would give rise to peramine. In Epichloe species that produce only peramine, the peramine synthetase gene is not localized in a gene cluster, in contrast to Metarhizium species that contain additional pyrrolopyrazine biosynthesis genes. The 2-oxoglutarate-Fe(II) type oxidoreductase ppzC hydroxylates peramine to yield the newly identified compound 8-hydroxyperamine whereas ppzD converts L-proline into trans-4-hydroxy-L-proline, a precursor of peramine biosynthesis. The polypeptide is 2-oxoglutarate-Fe(II) type oxidoreductase ppzC (Metarhizium rileyi (strain RCEF 4871) (Nomuraea rileyi)).